An 832-amino-acid chain; its full sequence is Protein P (832 aa).

The interval 1–177 is terminal protein domain (TP); the sequence is MPLSYQHFRR…FCGSPYSWEQ (177 aa). The interval 178–335 is spacer; the sequence is ELQHGAESFH…YCLSHIVNLL (158 aa). The disordered stretch occupies residues 241-263; the sequence is RRPFGVEPSGSGHTTNLASKSAS. Residues 251–263 show a composition bias toward polar residues; that stretch reads SGHTTNLASKSAS. The tract at residues 336–679 is polymerase/reverse transcriptase domain (RT); sequence EDWGPCAEHG…YLNLYPVARQ (344 aa). Residues 346–589 form the Reverse transcriptase domain; it reads EHHIRIPRTP…YSLHFMGYVI (244 aa). Mg(2+)-binding residues include D418, D540, and D541.

This sequence belongs to the hepadnaviridae P protein family.

It catalyses the reaction DNA(n) + a 2'-deoxyribonucleoside 5'-triphosphate = DNA(n+1) + diphosphate. The catalysed reaction is Endonucleolytic cleavage to 5'-phosphomonoester.. Activated by host HSP70 and HSP40 in vitro to be able to bind the epsilon loop of the pgRNA. Because deletion of the RNase H region renders the protein partly chaperone-independent, the chaperones may be needed indirectly to relieve occlusion of the RNA-binding site by this domain. Inhibited by several reverse-transcriptase inhibitors: Lamivudine, Adefovir and Entecavir. In terms of biological role, multifunctional enzyme that converts the viral RNA genome into dsDNA in viral cytoplasmic capsids. This enzyme displays a DNA polymerase activity that can copy either DNA or RNA templates, and a ribonuclease H (RNase H) activity that cleaves the RNA strand of RNA-DNA heteroduplexes in a partially processive 3'- to 5'-endonucleasic mode. Neo-synthesized pregenomic RNA (pgRNA) are encapsidated together with the P protein, and reverse-transcribed inside the nucleocapsid. Initiation of reverse-transcription occurs first by binding the epsilon loop on the pgRNA genome, and is initiated by protein priming, thereby the 5'-end of (-)DNA is covalently linked to P protein. Partial (+)DNA is synthesized from the (-)DNA template and generates the relaxed circular DNA (RC-DNA) genome. After budding and infection, the RC-DNA migrates in the nucleus, and is converted into a plasmid-like covalently closed circular DNA (cccDNA). The activity of P protein does not seem to be necessary for cccDNA generation, and is presumably released from (+)DNA by host nuclear DNA repair machinery. The sequence is that of Protein P from Homo sapiens (Human).